We begin with the raw amino-acid sequence, 476 residues long: Glycogen synthase (476 aa).

Lys-15 contributes to the ADP-alpha-D-glucose binding site.

Belongs to the glycosyltransferase 1 family. Bacterial/plant glycogen synthase subfamily.

The enzyme catalyses [(1-&gt;4)-alpha-D-glucosyl](n) + ADP-alpha-D-glucose = [(1-&gt;4)-alpha-D-glucosyl](n+1) + ADP + H(+). The protein operates within glycan biosynthesis; glycogen biosynthesis. Synthesizes alpha-1,4-glucan chains using ADP-glucose. This Yersinia enterocolitica serotype O:8 / biotype 1B (strain NCTC 13174 / 8081) protein is Glycogen synthase.